Reading from the N-terminus, the 409-residue chain is Single Ig IL-1-related receptor (409 aa).

The Extracellular portion of the chain corresponds to 1–117; the sequence is MAGVCDMAPN…TLWRAGPAGH (117 aa). An Ig-like C2-type domain is found at 9-108; the sequence is PNFLSPSEDQ…VWNVSSHSFT (100 aa). Asn-31, Asn-58, Asn-73, Asn-85, and Asn-101 each carry an N-linked (GlcNAc...) asparagine glycan. Cys-32 and Cys-97 are oxidised to a cystine. Residues 118-138 traverse the membrane as a helical; Signal-anchor for type III membrane protein segment; the sequence is VAAVLASLLVLVVLLLVALLY. Over 139 to 409 the chain is Cytoplasmic; sequence VKCRLNMLLW…FYCLVSEDDV (271 aa). Residues 162-306 enclose the TIR domain; that stretch reads KLYDAYVSYS…DFWKELQLAL (145 aa). At Ser-382 the chain carries Phosphoserine.

This sequence belongs to the interleukin-1 receptor family. As to quaternary structure, interacts with IL1R1, IRAK1, TLR4, TLR5, TLR9 and TRAF6. Upon IL-1 stimulation found in a complex at least composed of IL1R1, SIGIRR, MYD88, IRAK1 and TRAF6. Upon stimulation with LPC found in a complex at least composed of TLR4, SIG1IR, MYD88, IRAK1 and TRAF6. Interacts with PALM3. As to expression, expressed at high levels in kidney, and at moderate levels in colon, small intestine, lung, spleen and liver. Not expressed in brain and muscle. Expressed at high levels in epithelial cells, at moderate levels in splenocytes, and at low or undetectable levels in fibroblasts or endothelial cells. Expressed in mucosal and dendritic cells.

It localises to the membrane. In terms of biological role, acts as a negative regulator of the Toll-like and IL-1R receptor signaling pathways. Attenuates the recruitment of receptor-proximal signaling components to the TLR4 receptor, probably through an TIR-TIR domain interaction with TLR4. Through its extracellular domain interferes with the heterodimerization of Il1R1 and IL1RAP. The polypeptide is Single Ig IL-1-related receptor (Sigirr) (Mus musculus (Mouse)).